The primary structure comprises 114 residues: Probable divalent-cation tolerance protein cutA homolog (114 aa).

This sequence belongs to the CutA family. In terms of assembly, homotrimer.

The polypeptide is Probable divalent-cation tolerance protein cutA homolog (Encephalitozoon cuniculi (strain GB-M1) (Microsporidian parasite)).